A 62-amino-acid polypeptide reads, in one-letter code: Fungus-induced protein 1 (62 aa).

Positions 1-22 (MSQNLFQILLIFAILAALQVQG) are cleaved as a signal peptide.

In Caenorhabditis briggsae, this protein is Fungus-induced protein 1.